The sequence spans 1498 residues: DNA-directed RNA polymerase subunit beta' (1498 aa).

4 residues coordinate Zn(2+): Cys67, Cys69, Cys82, and Cys85. Residues Asp499, Asp501, and Asp503 each coordinate Mg(2+). The Zn(2+) site is built by Cys867, Cys943, Cys950, and Cys953.

It belongs to the RNA polymerase beta' chain family. In terms of assembly, the RNAP catalytic core consists of 2 alpha, 1 beta, 1 beta' and 1 omega subunit. When a sigma factor is associated with the core the holoenzyme is formed, which can initiate transcription. Mg(2+) is required as a cofactor. It depends on Zn(2+) as a cofactor.

It carries out the reaction RNA(n) + a ribonucleoside 5'-triphosphate = RNA(n+1) + diphosphate. In terms of biological role, DNA-dependent RNA polymerase catalyzes the transcription of DNA into RNA using the four ribonucleoside triphosphates as substrates. This Chlorobium phaeobacteroides (strain BS1) protein is DNA-directed RNA polymerase subunit beta'.